A 182-amino-acid chain; its full sequence is Lipoprotein signal peptidase (182 aa).

Helical transmembrane passes span 15 to 35, 44 to 64, 65 to 85, and 97 to 117; these read IYLG…FLVI, LEVF…FVFG, AFQD…VFLI, and PWGW…KFFV. Catalysis depends on residues D140 and D162. The chain crosses the membrane as a helical span at residues 155–175; the sequence is WPAFNVADSCVTIGLTILIFT.

This sequence belongs to the peptidase A8 family.

It is found in the cell inner membrane. The enzyme catalyses Release of signal peptides from bacterial membrane prolipoproteins. Hydrolyzes -Xaa-Yaa-Zaa-|-(S,diacylglyceryl)Cys-, in which Xaa is hydrophobic (preferably Leu), and Yaa (Ala or Ser) and Zaa (Gly or Ala) have small, neutral side chains.. The protein operates within protein modification; lipoprotein biosynthesis (signal peptide cleavage). Its function is as follows. This protein specifically catalyzes the removal of signal peptides from prolipoproteins. This is Lipoprotein signal peptidase from Leptospira interrogans serogroup Icterohaemorrhagiae serovar Lai (strain 56601).